We begin with the raw amino-acid sequence, 663 residues long: MRGCLQVLRWLSTSTARRPVSSRPLHEIFPKSEFRRPFTSTILRQAQASRNVSDLEKRIADIPIERFRNFCIVAHVDHGKSTLSDRLLELTGVIQPGSNKQVLDKLDVERERGITVKAQTCTMLYNHNGEDYLLHLIDTPGHVDFRAEVSRSYASCGGALLLVDASQGVQAQTVANFYLAFAQGLELVPVLNKVDLPSADPERALEQMRSSFELDTDNAIKVSAKTGLNVAQLLPTVIERIPAPVGDHTKPLRMLLVDSWYSTYKGVILLVRVFDGEIRAGDQVVSFATGLKYFVGEVGIMYPDQTPQTTLRAGQVGYIYFNPGMKRSKEAKIGDTFTKVGFEKKVEPLPGFEEPKSMVFVAAYPSDADHFEHLEDSVNQLVLNDRSITVQKESSEALGAGFRLGFLGTLHCSVFEDRLRHEHGASILITPPTVPVKVIYKDGKEVTITNPAHFPDEDDIRAKVAELREPYVMATLTFPDEYLGKVIELCEANRGIQHTLEYFTPTQVILKYELPLGQLVEDFFGKLKGSTKGYATLDYEEAGWKVSNIVKLQLLVNKKSVDAVARIVHYSQAERLGKQWVTKFKEHVDRQMFEIIIQAAVGRKIVARETIKPYRKDVLAKLHAADIGRKRKLLEKQKEGRKRLNAVGNVVIDHSAFQAFLSK.

A mitochondrion-targeting transit peptide spans 1-51 (MRGCLQVLRWLSTSTARRPVSSRPLHEIFPKSEFRRPFTSTILRQAQASRN). The 181-residue stretch at 65–245 (ERFRNFCIVA…TVIERIPAPV (181 aa)) folds into the tr-type G domain. Residues 74–81 (AHVDHGKS), 138–142 (DTPGH), and 192–195 (NKVD) contribute to the GTP site.

It belongs to the TRAFAC class translation factor GTPase superfamily. Classic translation factor GTPase family. LepA subfamily.

It localises to the mitochondrion inner membrane. The catalysed reaction is GTP + H2O = GDP + phosphate + H(+). Promotes mitochondrial protein synthesis. May act as a fidelity factor of the translation reaction, by catalyzing a one-codon backward translocation of tRNAs on improperly translocated ribosomes. Binds to mitochondrial ribosomes in a GTP-dependent manner. This chain is Translation factor guf1, mitochondrial (guf1), found in Talaromyces marneffei (strain ATCC 18224 / CBS 334.59 / QM 7333) (Penicillium marneffei).